Here is a 182-residue protein sequence, read N- to C-terminus: Large ribosomal subunit protein uL6 (182 aa).

It belongs to the universal ribosomal protein uL6 family. Part of the 50S ribosomal subunit.

Its function is as follows. This protein binds to the 23S rRNA, and is important in its secondary structure. It is located near the subunit interface in the base of the L7/L12 stalk, and near the tRNA binding site of the peptidyltransferase center. This Pelotomaculum thermopropionicum (strain DSM 13744 / JCM 10971 / SI) protein is Large ribosomal subunit protein uL6.